The primary structure comprises 191 residues: Peptidyl-tRNA hydrolase (191 aa).

Tyr-14 contributes to the tRNA binding site. The Proton acceptor role is filled by His-19. TRNA-binding residues include Tyr-64, Asn-66, and Asn-112.

Belongs to the PTH family. Monomer.

The protein resides in the cytoplasm. It carries out the reaction an N-acyl-L-alpha-aminoacyl-tRNA + H2O = an N-acyl-L-amino acid + a tRNA + H(+). In terms of biological role, hydrolyzes ribosome-free peptidyl-tRNAs (with 1 or more amino acids incorporated), which drop off the ribosome during protein synthesis, or as a result of ribosome stalling. Catalyzes the release of premature peptidyl moieties from peptidyl-tRNA molecules trapped in stalled 50S ribosomal subunits, and thus maintains levels of free tRNAs and 50S ribosomes. The chain is Peptidyl-tRNA hydrolase from Clostridium botulinum (strain Alaska E43 / Type E3).